The following is a 541-amino-acid chain: Carboxypeptidase Y homolog A (541 aa).

Positions 1–17 (MKTFTAALLVGTALAAV) are cleaved as a signal peptide. A propeptide spanning residues 18 to 122 (PQQQPLQTQV…KLENYDLRVK (105 aa)) is cleaved from the precursor. Intrachain disulfides connect C177-C416, C311-C325, C335-C358, C342-C351, and C380-C386. N-linked (GlcNAc...) asparagine glycosylation is present at N208. The active site involves S264. Residue D455 is part of the active site. 3 N-linked (GlcNAc...) asparagine glycosylation sites follow: N485, N491, and N506. H517 is an active-site residue.

This sequence belongs to the peptidase S10 family.

The protein localises to the vacuole. The enzyme catalyses Release of a C-terminal amino acid with broad specificity.. Functionally, vacuolar carboxypeptidase involved in degradation of small peptides. Digests preferentially peptides containing an aliphatic or hydrophobic residue in P1' position, as well as methionine, leucine or phenylalanine in P1 position of ester substrate. The protein is Carboxypeptidase Y homolog A (cpyA) of Uncinocarpus reesii (strain UAMH 1704).